A 358-amino-acid polypeptide reads, in one-letter code: Heme A synthase (358 aa).

A run of 8 helical transmembrane segments spans residues 22 to 42, 107 to 127, 133 to 153, 172 to 192, 208 to 228, 269 to 289, 302 to 322, and 324 to 344; these read IQVW…VGGA, VLGR…WATK, ILFP…IGWW, LAFH…LSRG, FAAW…LVAG, FIHR…AFYV, AFLI…TLLH, and VPIS…CFAV. His-271 lines the heme pocket. His-332 is a binding site for heme.

Belongs to the COX15/CtaA family. Type 2 subfamily. As to quaternary structure, interacts with CtaB. Heme b is required as a cofactor.

The protein resides in the cell membrane. It catalyses the reaction Fe(II)-heme o + 2 A + H2O = Fe(II)-heme a + 2 AH2. It participates in porphyrin-containing compound metabolism; heme A biosynthesis; heme A from heme O: step 1/1. Functionally, catalyzes the conversion of heme O to heme A by two successive hydroxylations of the methyl group at C8. The first hydroxylation forms heme I, the second hydroxylation results in an unstable dihydroxymethyl group, which spontaneously dehydrates, resulting in the formyl group of heme A. The chain is Heme A synthase from Bartonella tribocorum (strain CIP 105476 / IBS 506).